The primary structure comprises 254 residues: Alcohol dehydrogenase (254 aa).

F10–L33 contributes to the NAD(+) binding site. Residue S138 coordinates substrate. Y151 functions as the Proton acceptor in the catalytic mechanism.

The protein belongs to the short-chain dehydrogenases/reductases (SDR) family. Homodimer.

It carries out the reaction a primary alcohol + NAD(+) = an aldehyde + NADH + H(+). The enzyme catalyses a secondary alcohol + NAD(+) = a ketone + NADH + H(+). The polypeptide is Alcohol dehydrogenase (Adh) (Drosophila borealis (Fruit fly)).